The sequence spans 88 residues: Toxin ICK-12 (88 aa).

Residues 1 to 19 form the signal peptide; the sequence is MKSIVYMLLFCTFTVVILG. 4 disulfide bridges follow: Cys41-Cys55, Cys41-Cys78, Cys54-Cys67, and Cys81-Cys88.

It belongs to the neurotoxin 27 (Jztx-72) family. ICK-41 subfamily. Expressed by the venom gland.

Its subcellular location is the secreted. Its function is as follows. Probable neurotoxin with ion channel impairing activity. The polypeptide is Toxin ICK-12 (Trittame loki (Brush-footed trapdoor spider)).